The following is an 88-amino-acid chain: Small ribosomal subunit protein uS17 (88 aa).

The protein belongs to the universal ribosomal protein uS17 family. In terms of assembly, part of the 30S ribosomal subunit.

In terms of biological role, one of the primary rRNA binding proteins, it binds specifically to the 5'-end of 16S ribosomal RNA. This is Small ribosomal subunit protein uS17 from Pseudomonas fluorescens (strain ATCC BAA-477 / NRRL B-23932 / Pf-5).